Here is a 98-residue protein sequence, read N- to C-terminus: Class II hydrophobin 2 (98 aa).

An N-terminal signal peptide occupies residues 1–21 (MFFSRISTIVSMTALFASALA). Cystine bridges form between Cys-34/Cys-80, Cys-41/Cys-71, Cys-42/Cys-54, and Cys-81/Cys-92.

It belongs to the cerato-ulmin hydrophobin family.

The protein localises to the secreted. It is found in the cell wall. Its function is as follows. Aerial growth, conidiation, and dispersal of filamentous fungi in the environment rely upon a capability of their secreting small amphipathic proteins called hydrophobins (HPBs) with low sequence identity. Class I can self-assemble into an outermost layer of rodlet bundles on aerial cell surfaces, conferring cellular hydrophobicity that supports fungal growth, development and dispersal; whereas Class II form highly ordered films at water-air interfaces through intermolecular interactions but contribute nothing to the rodlet structure. In Botryotinia fuckeliana, hydrophobins are not involved in conferring surface hydrophobicity to conidia and aerial hyphae and their function in sclerotia and fruiting bodies remains to be investigated. This chain is Class II hydrophobin 2, found in Botryotinia fuckeliana (strain B05.10) (Noble rot fungus).